The chain runs to 382 residues: 1-deoxy-D-xylulose 5-phosphate reductoisomerase (382 aa).

NADPH-binding residues include T10, G11, S12, I13, G36, and N122. K123 contacts 1-deoxy-D-xylulose 5-phosphate. E124 provides a ligand contact to NADPH. D148 contacts Mn(2+). 1-deoxy-D-xylulose 5-phosphate contacts are provided by S149, E150, S174, and H197. Mn(2+) is bound at residue E150. G203 serves as a coordination point for NADPH. 4 residues coordinate 1-deoxy-D-xylulose 5-phosphate: S210, N215, K216, and E219. Position 219 (E219) interacts with Mn(2+).

It belongs to the DXR family. Mg(2+) is required as a cofactor. The cofactor is Mn(2+).

It catalyses the reaction 2-C-methyl-D-erythritol 4-phosphate + NADP(+) = 1-deoxy-D-xylulose 5-phosphate + NADPH + H(+). It participates in isoprenoid biosynthesis; isopentenyl diphosphate biosynthesis via DXP pathway; isopentenyl diphosphate from 1-deoxy-D-xylulose 5-phosphate: step 1/6. Catalyzes the NADPH-dependent rearrangement and reduction of 1-deoxy-D-xylulose-5-phosphate (DXP) to 2-C-methyl-D-erythritol 4-phosphate (MEP). The sequence is that of 1-deoxy-D-xylulose 5-phosphate reductoisomerase from Pelodictyon phaeoclathratiforme (strain DSM 5477 / BU-1).